Consider the following 41-residue polypeptide: Antifungal peptide 2 (41 aa).

Gln-1 carries the post-translational modification Pyrrolidone carboxylic acid. 5 disulfide bridges follow: Cys-3-Cys-17, Cys-7-Cys-37, Cys-11-Cys-23, Cys-16-Cys-30, and Cys-35-Cys-39. A Chitin-binding type-1 domain is found at 4 to 41; it reads ASRCPRPCNAGLCCSIYGYCGSGAAYCGAGNCRCQCRG.

As to quaternary structure, monomer.

In terms of biological role, has antifungal activity against P.infestans, A.lycopersici, V.dahliae, G.zeae, A.nicotianae, F.moniliforme, F.oxysporum and C.gossypii. The sequence is that of Antifungal peptide 2 from Eucommia ulmoides (Hardy rubber tree).